The following is a 361-amino-acid chain: Serpentine receptor class X 45 (361 aa).

The next 7 helical transmembrane spans lie at 20 to 40 (LLIF…AFYI), 58 to 78 (AAGD…VLFF), 92 to 112 (FAQL…VISL), 133 to 153 (TTFL…FLVI), 176 to 196 (MINV…MFAI), 242 to 262 (LLYV…PVPL), and 278 to 298 (LLTT…TLIF). Residue Asn317 is glycosylated (N-linked (GlcNAc...) asparagine).

This sequence belongs to the G-protein coupled receptor 1 family.

It localises to the cell membrane. This is Serpentine receptor class X 45 (srx-45) from Caenorhabditis elegans.